The chain runs to 320 residues: ATP-dependent 6-phosphofructokinase (320 aa).

An ATP-binding site is contributed by G11. An ADP-binding site is contributed by 21–25 (RAVTK). Residues 72–73 (RF) and 102–105 (GDGS) each bind ATP. Residue D103 participates in Mg(2+) binding. 125 to 127 (TID) serves as a coordination point for substrate. The active-site Proton acceptor is D127. R154 is an ADP binding site. Substrate contacts are provided by residues R162 and 169-171 (MGR). ADP is bound by residues 185–187 (GAD) and 213–215 (KDH). Substrate contacts are provided by residues E222, R243, and 249–252 (HMQR).

This sequence belongs to the phosphofructokinase type A (PFKA) family. ATP-dependent PFK group I subfamily. Prokaryotic clade 'B1' sub-subfamily. Homotetramer. Mg(2+) serves as cofactor.

The protein resides in the cytoplasm. The catalysed reaction is beta-D-fructose 6-phosphate + ATP = beta-D-fructose 1,6-bisphosphate + ADP + H(+). It participates in carbohydrate degradation; glycolysis; D-glyceraldehyde 3-phosphate and glycerone phosphate from D-glucose: step 3/4. With respect to regulation, allosterically activated by ADP and other diphosphonucleosides, and allosterically inhibited by phosphoenolpyruvate. Catalyzes the phosphorylation of D-fructose 6-phosphate to fructose 1,6-bisphosphate by ATP, the first committing step of glycolysis. This Lactobacillus acidophilus (strain ATCC 700396 / NCK56 / N2 / NCFM) protein is ATP-dependent 6-phosphofructokinase.